Reading from the N-terminus, the 197-residue chain is Nucleoid occlusion factor SlmA (197 aa).

One can recognise an HTH tetR-type domain in the interval 7-67 (INRREHILQC…GLIDFIEESL (61 aa)). A DNA-binding region (H-T-H motif) is located at residues 30–49 (TTAKLAAEVGVSEAALYRHF).

Belongs to the nucleoid occlusion factor SlmA family. In terms of assembly, homodimer. Interacts with FtsZ.

Its subcellular location is the cytoplasm. The protein resides in the nucleoid. In terms of biological role, required for nucleoid occlusion (NO) phenomenon, which prevents Z-ring formation and cell division over the nucleoid. Acts as a DNA-associated cell division inhibitor that binds simultaneously chromosomal DNA and FtsZ, and disrupts the assembly of FtsZ polymers. SlmA-DNA-binding sequences (SBS) are dispersed on non-Ter regions of the chromosome, preventing FtsZ polymerization at these regions. This Shewanella sediminis (strain HAW-EB3) protein is Nucleoid occlusion factor SlmA.